We begin with the raw amino-acid sequence, 274 residues long: tRNA-cytidine(32) 2-sulfurtransferase (274 aa).

Residues 40 to 45 (SGGKDS) carry the PP-loop motif motif. Positions 115, 118, and 206 each coordinate [4Fe-4S] cluster.

This sequence belongs to the TtcA family. In terms of assembly, homodimer. Requires Mg(2+) as cofactor. [4Fe-4S] cluster is required as a cofactor.

Its subcellular location is the cytoplasm. The catalysed reaction is cytidine(32) in tRNA + S-sulfanyl-L-cysteinyl-[cysteine desulfurase] + AH2 + ATP = 2-thiocytidine(32) in tRNA + L-cysteinyl-[cysteine desulfurase] + A + AMP + diphosphate + H(+). It participates in tRNA modification. Its function is as follows. Catalyzes the ATP-dependent 2-thiolation of cytidine in position 32 of tRNA, to form 2-thiocytidine (s(2)C32). The sulfur atoms are provided by the cysteine/cysteine desulfurase (IscS) system. The protein is tRNA-cytidine(32) 2-sulfurtransferase of Pseudomonas paraeruginosa (strain DSM 24068 / PA7) (Pseudomonas aeruginosa (strain PA7)).